The sequence spans 185 residues: Protein PBP4 (185 aa).

Low complexity-rich tracts occupy residues 1-24 (MTTTSTTSVDGRTSSTLKATLSAS) and 46-62 (AQAAAKALPRQQQQQQQ). Disordered regions lie at residues 1–116 (MTTT…YNRE) and 147–168 (ETASGRVSTATDWGTVSSSKNK). 3 stretches are compositionally biased toward polar residues: residues 73–83 (PANTKTKTIAS), 91–102 (KGSSTANGSSTN), and 147–166 (ETASGRVSTATDWGTVSSSK).

Interacts with IGO1, LSM12 and PBP1.

It localises to the cytoplasm. It is found in the nucleus. This Saccharomyces cerevisiae (strain ATCC 204508 / S288c) (Baker's yeast) protein is Protein PBP4 (PBP4).